The sequence spans 89 residues: MSLSVEAKAKIVADFGRGTNDTGSSEVQVALLTAQINHLQGHFSEHKKDHHSRRGLLRMVSTRRKLLDYLKRQDVARYASLIERLGLRR.

The protein belongs to the universal ribosomal protein uS15 family. Part of the 30S ribosomal subunit. Forms a bridge to the 50S subunit in the 70S ribosome, contacting the 23S rRNA.

Its function is as follows. One of the primary rRNA binding proteins, it binds directly to 16S rRNA where it helps nucleate assembly of the platform of the 30S subunit by binding and bridging several RNA helices of the 16S rRNA. In terms of biological role, forms an intersubunit bridge (bridge B4) with the 23S rRNA of the 50S subunit in the ribosome. The protein is Small ribosomal subunit protein uS15 of Yersinia pseudotuberculosis serotype O:1b (strain IP 31758).